The sequence spans 136 residues: Small integral membrane protein 23 (136 aa).

At 1-31 (MTIQKTGCRGREAAEVVEQRRRSHHCDDRKQ) the chain is on the cytoplasmic side. Residues 32 to 52 (TLLALLILVLYLGMGISGSSW) form a helical; Signal-anchor for type II membrane protein membrane-spanning segment. The Extracellular segment spans residues 53 to 136 (EVSGQTKDCN…DLRPEDPCFT (84 aa)). Positions 92–124 (LKINLHGFLEKLEKEVRELEQLVRDLEFWLDAL) form a coiled coil.

Its subcellular location is the membrane. The polypeptide is Small integral membrane protein 23 (Smim23) (Mus musculus (Mouse)).